Reading from the N-terminus, the 955-residue chain is Vacuolar membrane protease (955 aa).

Topologically, residues 1–16 (MASLRLPRANPLAFTR) are cytoplasmic. A helical transmembrane segment spans residues 17 to 37 (WPVTVITAIVYLALLIPLLVV). The Vacuolar segment spans residues 38–390 (HHVVPSAPSS…STFVLFQLHT (353 aa)). N-linked (GlcNAc...) asparagine glycans are attached at residues Asn53 and Asn119. Zn(2+)-binding residues include His174 and Asp186. Glu220 functions as the Proton acceptor in the catalytic mechanism. 3 residues coordinate Zn(2+): Glu221, Glu246, and His319. Residues 391–411 (LFALLVTLLIVGPLTLLFTSI) traverse the membrane as a helical segment. The Cytoplasmic segment spans residues 412–442 (ALTKADKMYLFRSSAKSEDRLDVVPLQGLRG). The chain crosses the membrane as a helical span at residues 443-463 (FFRFPFLFGIPTVVTVGLAYL). The Vacuolar portion of the chain corresponds to 464 to 473 (VTKVNPYIIH). A helical membrane pass occupies residues 474-494 (SSAYAVWSMMVAAWVFLAWFV). The Cytoplasmic segment spans residues 495–508 (SRVADFARPSAFHR). A helical transmembrane segment spans residues 509–529 (IYTLTWMYVLSWVSAVIATVY). Residues 530–533 (ANQR) lie on the Vacuolar side of the membrane. The chain crosses the membrane as a helical span at residues 534-554 (GLAGGYFIFFFHAGIFLAKWI). Residues 555-656 (SYLELFALPS…WSYALPKWTW (102 aa)) are Cytoplasmic-facing. The span at 574–590 (SASGRASGHGSRRGTTS) shows a compositional bias: low complexity. Residues 574 to 611 (SASGRASGHGSRRGTTSGEDDGEEAEEEPTESTSLLGS) are disordered. Positions 591–603 (GEDDGEEAEEEPT) are enriched in acidic residues. A helical transmembrane segment spans residues 657–677 (VLQLLLTAPITLIMVGPLALL). At 678 to 693 (TISAISQTGQDGGHPL) the chain is on the vacuolar side. A helical transmembrane segment spans residues 694–714 (FAYVAIAIFTTIMLTPLLPFI). The Cytoplasmic portion of the chain corresponds to 715–721 (HRYTYHV). A helical transmembrane segment spans residues 722–742 (PLFLLAVFLGTLIYNLVAFPF). Over 743-955 (SDSNRLKLYY…RRAFEIGNDD (213 aa)) the chain is Vacuolar. A glycan (N-linked (GlcNAc...) asparagine) is linked at Asn826.

Belongs to the peptidase M28 family. Zn(2+) is required as a cofactor.

The protein localises to the vacuole membrane. May be involved in vacuolar sorting and osmoregulation. This chain is Vacuolar membrane protease, found in Aspergillus oryzae (strain ATCC 42149 / RIB 40) (Yellow koji mold).